A 282-amino-acid chain; its full sequence is AB hydrolase superfamily protein FGSG_00045 (282 aa).

Positions 1–10 (MAPISSTRPS) are enriched in polar residues. The disordered stretch occupies residues 1–22 (MAPISSTRPSHSIAADNPNPTT). The AB hydrolase-1 domain maps to 22–270 (TQVNFNTNMT…FADMVKRWII (249 aa)).

This sequence belongs to the AB hydrolase superfamily.

It participates in mycotoxin biosynthesis. In terms of biological role, AB hydrolase superfamily protein; part of the gene cluster that mediates the biosynthesis of gramillins A and B, bicyclic lipopeptides that induce cell death in maize leaves but not in wheat leaves. The nonribosomal peptide synthetase GRA1 incorporates respectively a glutamic adic (Glu), a leucine (Leu), a serine (Ser), a hydroxyglutamine (HOGln), a 2-amino decanoic acid, and 2 cysteins (CysB and CysA). The biosynthesis of 2-amino decanoic acid incorporated in gramillins could be initiated by a fatty acid synthase composed of the alpha and beta subunits FGSG_00036 and FGSG_11656. The cytochrome P450 monooxygenase FGSG_15680 could hydroxylate the fatty acid chain. Subsequent oxidation to the ketone by the oxidoreductase FGSG_00048 and transamination by aminotransferase FGSG_00049 could form 2-amino-decanoic acid. On the other hand, FGSG_15680 could also be responsible for the HO-modified glutamine at the gamma-position. Whether hydroxylation occurs on the fully assembled product or on the Gln residue prior to assembly into the gramillins requires further proof. The thioredoxin FGSG_00043 could also be required for the disulfide-bond formation between CysA and CysB. The specific involvement of the remaining proteins from the cluster is more difficult to discern, but could have broader regulatory (FGSG_00040 and FGSG_11657) or enzymatic functions (FGSG_00044 and FGSG_00045). The final C-domain of GRA1 does not possess the expected sequence of a termination CT domain, often implicated in macrocyclization and release of a cyclopeptidein fungal NRPs; and the thioesterase FGSG_00047 may act in concert with the terminal C-domain of GRA1 to catalyze the formation of the macrocyclic anhydride and release of the products. The chain is AB hydrolase superfamily protein FGSG_00045 from Gibberella zeae (strain ATCC MYA-4620 / CBS 123657 / FGSC 9075 / NRRL 31084 / PH-1) (Wheat head blight fungus).